The sequence spans 345 residues: MIKLKNISKVFNVSGKNLTALDNVSLEVPQGQICGVIGASGAGKSTLIRCINLLERPTSGSVIVDNTDLTQLSDNELIHARRHIGMIFQHFNLLSSRTVFDNVALPLELEKTDKTQIKQKVDALLNLVGLYDKKDVYPANLSGGQKQRVAIARALANSPKVLLCDEATSALDPATTQSILKLLKEINRTLGITILLITHEMDVVKRICDQVAVINKGQLIEQGSVGDIFSNPKTLLAQEFIHSTFHINLPEEYMENLSATPKHAKSYPIIKFEFTGRSVDAPLLSQASKQFGVDLSILSSQIDYAGEVKFGFVIAEVEGEEEAITQTKIYLMENNVRVEVLGYVG.

The ABC transporter domain occupies 2–241; that stretch reads IKLKNISKVF…PKTLLAQEFI (240 aa). An ATP-binding site is contributed by 38–45; sequence GASGAGKS.

This sequence belongs to the ABC transporter superfamily. Methionine importer (TC 3.A.1.24) family. As to quaternary structure, the complex is composed of two ATP-binding proteins (MetN), two transmembrane proteins (MetI) and a solute-binding protein (MetQ).

The protein localises to the cell inner membrane. It catalyses the reaction L-methionine(out) + ATP + H2O = L-methionine(in) + ADP + phosphate + H(+). It carries out the reaction D-methionine(out) + ATP + H2O = D-methionine(in) + ADP + phosphate + H(+). In terms of biological role, part of the ABC transporter complex MetNIQ involved in methionine import. Responsible for energy coupling to the transport system. This chain is Methionine import ATP-binding protein MetN, found in Histophilus somni (strain 129Pt) (Haemophilus somnus).